We begin with the raw amino-acid sequence, 232 residues long: 2,3-bisphosphoglycerate-dependent phosphoglycerate mutase (232 aa).

Substrate is bound by residues 10 to 17 (RHGESIWN), 23 to 24 (TG), R62, 89 to 92 (ERHY), K100, 116 to 117 (RR), and 185 to 186 (GN). H11 acts as the Tele-phosphohistidine intermediate in catalysis. The active-site Proton donor/acceptor is E89.

This sequence belongs to the phosphoglycerate mutase family. BPG-dependent PGAM subfamily. Homodimer.

The catalysed reaction is (2R)-2-phosphoglycerate = (2R)-3-phosphoglycerate. It participates in carbohydrate degradation; glycolysis; pyruvate from D-glyceraldehyde 3-phosphate: step 3/5. Catalyzes the interconversion of 2-phosphoglycerate and 3-phosphoglycerate. This Buchnera aphidicola subsp. Baizongia pistaciae (strain Bp) protein is 2,3-bisphosphoglycerate-dependent phosphoglycerate mutase.